A 505-amino-acid polypeptide reads, in one-letter code: Protein ERGIC-53-like (505 aa).

A signal peptide spans 1–25 (MLEIRGLSPSLCLLSLLLVLHGAER). Over 26–438 (SQPPPRRRFE…SGWLLGSSTC (413 aa)) the chain is Lumenal. Residues 32 to 254 (RRFEYKLSFK…DVLSFLTFSL (223 aa)) enclose the L-type lectin-like domain. N84 is a glycosylation site (N-linked (GlcNAc...) asparagine). C177 and C216 form a disulfide bridge. A helical transmembrane segment spans residues 439-459 (LHTSIFLFFLLLQTVGFFCYV). Topologically, residues 460-505 (NFSRQELDKRLQEYLSTGSLSLEPALPITRTIGVLRRQPISPSMQA) are cytoplasmic.

It is found in the endoplasmic reticulum-Golgi intermediate compartment membrane. In Mus musculus (Mouse), this protein is Protein ERGIC-53-like (Lman1l).